A 752-amino-acid polypeptide reads, in one-letter code: Catalase-peroxidase (752 aa).

Residues 1 to 20 (MENELVSKVKAPVPGNQTNT) are disordered. The tryptophyl-tyrosyl-methioninium (Trp-Tyr) (with M-260) cross-link spans 111 to 234 (WHSAGTYRIG…LGAVQMGLIY (124 aa)). His-112 functions as the Proton acceptor in the catalytic mechanism. Residues 234-260 (YVNPEGPNGKPDPAAAAVDIRETFARM) constitute a cross-link (tryptophyl-tyrosyl-methioninium (Tyr-Met) (with W-111)). His-275 is a binding site for heme b.

Belongs to the peroxidase family. Peroxidase/catalase subfamily. Homodimer or homotetramer. Heme b serves as cofactor. Formation of the three residue Trp-Tyr-Met cross-link is important for the catalase, but not the peroxidase activity of the enzyme.

The catalysed reaction is H2O2 + AH2 = A + 2 H2O. It catalyses the reaction 2 H2O2 = O2 + 2 H2O. Bifunctional enzyme with both catalase and broad-spectrum peroxidase activity. The polypeptide is Catalase-peroxidase (Koribacter versatilis (strain Ellin345)).